Reading from the N-terminus, the 420-residue chain is Protein disulfide isomerase CRELD1 (420 aa).

An N-terminal signal peptide occupies residues 1–29 (MAPWPPKGLVPAMLWGLSLFLNLPGPIWL). The Extracellular segment spans residues 30–362 (QPSPPPQSSP…GFFSEMTEDE (333 aa)). A CXXC motif is present at residues 46 to 49 (CHTC). Cysteine 46 and cysteine 49 are oxidised to a cystine. The N-linked (GlcNAc...) asparagine glycan is linked to asparagine 79. An EGF-like 1 domain is found at 153-193 (LPCPGGTERPCGGYGQCEGEGTRGGSGHCDCQAGYGGEACG). 3 disulfides stabilise this stretch: cysteine 155-cysteine 169, cysteine 163-cysteine 181, and cysteine 183-cysteine 192. Residue asparagine 205 is glycosylated (N-linked (GlcNAc...) asparagine). 2 FU repeats span residues 208–256 (HLVC…GANC) and 268–315 (SYEC…EVCP). The CXXC motif lies at 278-281 (CLGC). Intrachain disulfides connect cysteine 278–cysteine 281, cysteine 309–cysteine 321, cysteine 314–cysteine 330, and cysteine 332–cysteine 343. The region spanning 305–344 (DVDECETEVCPGENKQCENTEGGYRCICAEGYKQMEGICV) is the EGF-like 2; calcium-binding domain. Residues 363–383 (LVVLQQMFFGIIICALATLAA) traverse the membrane as a helical segment. Residue lysine 384 is a topological domain, cytoplasmic. Residues 385 to 405 (GDLVFTAIFIGAVAAMTGYWL) traverse the membrane as a helical segment. Topologically, residues 406-420 (SERSDRVLEGFIKGR) are extracellular.

This sequence belongs to the CRELD family. Highly expressed in fetal lung, liver, kidney, adult heart, brain and skeletal muscle. Weakly expressed in placenta, fetal brain, and adult lung, liver, kidney and pancreas.

It localises to the membrane. It catalyses the reaction Catalyzes the rearrangement of -S-S- bonds in proteins.. In terms of biological role, protein disulfide isomerase. Promotes the localization of acetylcholine receptors (AChRs) to the plasma membrane. In Homo sapiens (Human), this protein is Protein disulfide isomerase CRELD1 (CRELD1).